The chain runs to 153 residues: Small ribosomal subunit protein uS5 (153 aa).

One can recognise an S5 DRBM domain in the interval 15–78; it reads FQEVVVNVGR…DDAFKNLIHV (64 aa).

The protein belongs to the universal ribosomal protein uS5 family. As to quaternary structure, part of the 30S ribosomal subunit. Contacts proteins S4 and S8.

Its function is as follows. With S4 and S12 plays an important role in translational accuracy. In terms of biological role, located at the back of the 30S subunit body where it stabilizes the conformation of the head with respect to the body. The protein is Small ribosomal subunit protein uS5 of Helicobacter acinonychis (strain Sheeba).